The sequence spans 290 residues: MKKVFYPLACCLAAGVLVSCSGQKKAGSAQEEQSANEVAVSYSKSLKAAEMDSLQLPVDADGYITIFDGKTFNGWRGYGKDRVPSKWTIEDGCIKFNGSGGGEAQDGDGGDLIFAHKFKNFELEMEWKVSKGGNSGIFYLAQEVTSKDKDGNDVLEPIYISAPEYQVLDNDNHPDAKLGKDNNRQSASLYDMIPAVPQNAKPFGEWNKAKIMVYKGTVVHGQNDENVLEYHLWTKQWTDLLQASKFSQDKWPLAFELLNNCGGENHEGFIGMQDHGDDVWFRNIRVKVLD.

A signal peptide spans 1-19 (MKKVFYPLACCLAAGVLVS). A lipid anchor (N-palmitoyl cysteine) is attached at cysteine 20. Cysteine 20 is lipidated: S-diacylglycerol cysteine.

The protein resides in the cell membrane. The enzyme catalyses 3-dehydro-alpha,alpha-trehalose + H2O = 3-dehydro-D-glucose + D-glucose. In terms of biological role, 3-keto-disaccharide hydrolase that preferentially hydrolyzes 3-keto-trehalose (3-dehydro-alpha,alpha-trehalose). Important for disaccharide utilization in the human gut. Also shows hydrolysis activity with the glucosinolates glucoraphanin or glucobrassicin, but with much lower efficiency. In Bacteroides thetaiotaomicron (strain ATCC 29148 / DSM 2079 / JCM 5827 / CCUG 10774 / NCTC 10582 / VPI-5482 / E50), this protein is 3-keto-disaccharide hydrolase.